We begin with the raw amino-acid sequence, 56 residues long: PI-stichotoxin-Hcr2o (56 aa).

The BPTI/Kunitz inhibitor domain occupies 4–54; that stretch reads CLEPKVVGPCKARIRRFYFDSETGKCTPFIYGGCGGNGNNFETLHACRAIC. Cystine bridges form between Cys-4-Cys-54, Cys-13-Cys-37, and Cys-29-Cys-50.

Belongs to the venom Kunitz-type family. Sea anemone type 2 potassium channel toxin subfamily.

It localises to the secreted. It is found in the nematocyst. Its function is as follows. This recombinant serine protease inhibitor inhibits both trypsin (Ki=21 nM) and chymotrypsin (Ki=500 nM). It possesses anti-inflammatory activity in vitro. It inhibits macrophage LPS-induced nitric oxide synthesis, and blocks histamine influence on intracellular calcium concentration in murine bone marrow-derived macrophages, which can indicate inhibition of H1-histamine receptor (HRH1). In vitro, it shows cytoprotective activity in the oxidative stress agent 6-hydroxydopamine (6-OHDA)-induced neurotoxicity model. In this model, it decreases reactive oxygen species (ROS) levels, and increases cell viability in a correlated manner. It is possible that the observed effect is due to the ability of this peptides to act as free-radical scavenger. In vivo, it shows analgesic activity, since it increases hot plate and tail flick withdrawal latencies, when using a mice thermal pain stimulation model. The protein is PI-stichotoxin-Hcr2o of Radianthus crispa (Leathery sea anemone).